A 703-amino-acid chain; its full sequence is Lactococcin-G-processing and transport ATP-binding protein LagD (703 aa).

A Peptidase C39 domain is found at Q7–P132. The active site involves C13. The region spanning P153–K435 is the ABC transmembrane type-1 domain. Helical transmembrane passes span F162 to I182, T189 to Y209, M224 to T244, A267 to I287, Q291 to I311, M381 to D401, and L409 to L429. Residues I469–A703 form the ABC transporter domain. G502–S509 lines the ATP pocket.

Belongs to the ABC transporter superfamily. LagD family. In terms of assembly, homodimer.

The protein localises to the cell membrane. Its function is as follows. LagD (TC 3.A.1) is involved in processing the signal peptide and probably also in export of the bacteriocin lactococcin G. The polypeptide is Lactococcin-G-processing and transport ATP-binding protein LagD (lagD) (Lactococcus lactis subsp. lactis (Streptococcus lactis)).